The sequence spans 311 residues: p-hydroxybenzoic acid efflux pump subunit AaeA (311 aa).

Residues 11-31 (VGITVLVVVLAVIAIFNVWAF) traverse the membrane as a helical segment.

Belongs to the membrane fusion protein (MFP) (TC 8.A.1) family.

It is found in the cell inner membrane. Functionally, forms an efflux pump with AaeB. The chain is p-hydroxybenzoic acid efflux pump subunit AaeA from Yersinia pseudotuberculosis serotype O:3 (strain YPIII).